Here is a 134-residue protein sequence, read N- to C-terminus: Large ribosomal subunit protein uL16c (134 aa).

The span at 1-17 shows a compositional bias: basic residues; it reads MLSPKRTRFRKQHRGRM. The segment at 1–21 is disordered; sequence MLSPKRTRFRKQHRGRMKGIS.

This sequence belongs to the universal ribosomal protein uL16 family. As to quaternary structure, part of the 50S ribosomal subunit.

It localises to the plastid. The protein localises to the chloroplast. The sequence is that of Large ribosomal subunit protein uL16c from Solanum bulbocastanum (Wild potato).